Reading from the N-terminus, the 240-residue chain is Mannosyl-D-glycerate transport/metabolism system repressor MngR (240 aa).

In terms of domain architecture, HTH gntR-type spans 4-72 (KPLYRQIADR…QGSGTYVKEE (69 aa)). Positions 32–51 (ESALQTEFGVSRVTVRQALR) form a DNA-binding region, H-T-H motif.

Functionally, represses mngA and mngB. Regulates its own expression. The protein is Mannosyl-D-glycerate transport/metabolism system repressor MngR (mngR) of Escherichia coli (strain K12).